The chain runs to 364 residues: UDP-N-acetylglucosamine--N-acetylmuramyl-(pentapeptide) pyrophosphoryl-undecaprenol N-acetylglucosamine transferase (364 aa).

UDP-N-acetyl-alpha-D-glucosamine-binding positions include threonine 10–glycine 12, asparagine 126, arginine 167, serine 199, isoleucine 253, and glutamine 298.

The protein belongs to the glycosyltransferase 28 family. MurG subfamily.

The protein resides in the cell inner membrane. It catalyses the reaction di-trans,octa-cis-undecaprenyl diphospho-N-acetyl-alpha-D-muramoyl-L-alanyl-D-glutamyl-meso-2,6-diaminopimeloyl-D-alanyl-D-alanine + UDP-N-acetyl-alpha-D-glucosamine = di-trans,octa-cis-undecaprenyl diphospho-[N-acetyl-alpha-D-glucosaminyl-(1-&gt;4)]-N-acetyl-alpha-D-muramoyl-L-alanyl-D-glutamyl-meso-2,6-diaminopimeloyl-D-alanyl-D-alanine + UDP + H(+). It participates in cell wall biogenesis; peptidoglycan biosynthesis. Its function is as follows. Cell wall formation. Catalyzes the transfer of a GlcNAc subunit on undecaprenyl-pyrophosphoryl-MurNAc-pentapeptide (lipid intermediate I) to form undecaprenyl-pyrophosphoryl-MurNAc-(pentapeptide)GlcNAc (lipid intermediate II). In Amoebophilus asiaticus (strain 5a2), this protein is UDP-N-acetylglucosamine--N-acetylmuramyl-(pentapeptide) pyrophosphoryl-undecaprenol N-acetylglucosamine transferase.